We begin with the raw amino-acid sequence, 638 residues long: Chaperone protein DnaK (638 aa).

Thr199 carries the phosphothreonine; by autocatalysis modification. The segment at Glu600 to Lys638 is disordered. A compositionally biased stretch (basic and acidic residues) spans Asn602–Asn624.

This sequence belongs to the heat shock protein 70 family.

Acts as a chaperone. The polypeptide is Chaperone protein DnaK (Buchnera aphidicola subsp. Schizaphis graminum (strain Sg)).